The chain runs to 444 residues: uncharacterized protein (444 aa).

Over residues 1 to 11 the composition is skewed to basic and acidic residues; sequence MASSAGRDKLR. Positions 1–35 are disordered; the sequence is MASSAGRDKLRSRGQRVFAFGSSTPRDLSHMSKVP.

This is an uncharacterized protein from Caenorhabditis elegans.